The primary structure comprises 451 residues: D-aminoacyl-tRNA deacylase (451 aa).

A disordered region spans residues 410–437 (RTADIPEGPKFGKLASGESVEIDGEEID).

It belongs to the DtdA deacylase family. Monomer. Zn(2+) is required as a cofactor.

It catalyses the reaction a D-aminoacyl-tRNA + H2O = a tRNA + a D-alpha-amino acid + H(+). The enzyme catalyses glycyl-tRNA(Ala) + H2O = tRNA(Ala) + glycine + H(+). In terms of biological role, D-aminoacyl-tRNA deacylase with broad substrate specificity. By recycling D-aminoacyl-tRNA to D-amino acids and free tRNA molecules, this enzyme counteracts the toxicity associated with the formation of D-aminoacyl-tRNA entities in vivo. This chain is D-aminoacyl-tRNA deacylase, found in Haloarcula marismortui (strain ATCC 43049 / DSM 3752 / JCM 8966 / VKM B-1809) (Halobacterium marismortui).